Here is a 61-residue protein sequence, read N- to C-terminus: Metallothionein-2B (61 aa).

M1 carries the post-translational modification N-acetylmethionine. The tract at residues 1–29 (MDPNCSCATGDSCTCASSCKCKECKCTSC) is beta. A divalent metal cation is bound by residues C5, C7, C13, C15, C19, C21, C24, C26, C29, C33, C34, C36, C37, C41, C44, C48, C50, C57, C59, and C60. The alpha stretch occupies residues 30 to 61 (KKSCCSCCPAGCTKCAQGCICKGASDKCSCCA).

The protein belongs to the metallothionein superfamily. Type 1 family. As to quaternary structure, monomer.

Its function is as follows. Metallothioneins have a high content of cysteine residues that bind various heavy metals; these proteins are transcriptionally regulated by both heavy metals and glucocorticoids. In Oryctolagus cuniculus (Rabbit), this protein is Metallothionein-2B.